A 302-amino-acid chain; its full sequence is N-acetyl-D-glucosamine kinase (302 aa).

ATP is bound by residues 4–11 (GFDVGGTK) and 133–140 (GFGGGLVY). 4 residues coordinate Zn(2+): His157, Cys177, Cys179, and Cys184.

Belongs to the ROK (NagC/XylR) family. NagK subfamily.

It carries out the reaction N-acetyl-D-glucosamine + ATP = N-acetyl-D-glucosamine 6-phosphate + ADP + H(+). It functions in the pathway cell wall biogenesis; peptidoglycan recycling. Its function is as follows. Catalyzes the phosphorylation of N-acetyl-D-glucosamine (GlcNAc) derived from cell-wall degradation, yielding GlcNAc-6-P. This Vibrio cholerae serotype O1 (strain ATCC 39315 / El Tor Inaba N16961) protein is N-acetyl-D-glucosamine kinase.